The sequence spans 89 residues: Small ribosomal subunit protein uS17 (89 aa).

Belongs to the universal ribosomal protein uS17 family. In terms of assembly, part of the 30S ribosomal subunit.

One of the primary rRNA binding proteins, it binds specifically to the 5'-end of 16S ribosomal RNA. This Delftia acidovorans (strain DSM 14801 / SPH-1) protein is Small ribosomal subunit protein uS17.